Reading from the N-terminus, the 95-residue chain is CRISPR-associated endoribonuclease Cas2 (95 aa).

Mg(2+) is bound at residue Asp9.

The protein belongs to the CRISPR-associated endoribonuclease Cas2 protein family. In terms of assembly, homodimer, forms a heterotetramer with a Cas1 homodimer. Mg(2+) is required as a cofactor.

In terms of biological role, CRISPR (clustered regularly interspaced short palindromic repeat), is an adaptive immune system that provides protection against mobile genetic elements (viruses, transposable elements and conjugative plasmids). CRISPR clusters contain sequences complementary to antecedent mobile elements and target invading nucleic acids. CRISPR clusters are transcribed and processed into CRISPR RNA (crRNA). Functions as a ssRNA-specific endoribonuclease. Involved in the integration of spacer DNA into the CRISPR cassette. The sequence is that of CRISPR-associated endoribonuclease Cas2 from Methylorubrum extorquens (strain CM4 / NCIMB 13688) (Methylobacterium extorquens).